The following is a 246-amino-acid chain: MIASHAILLGVNIDHVATLRQARGTRYPDPIQAAIEAEQAGADGITLHLREDRRHIQERDVALLRDVLVSKMNLEMAVTGEMLAIAEKYCPEDCCLVPERREELTTEGGLNVTGQLARITEACVRLKEAGTRVSLFIDADPRQVEAAAQANAPVIEIHTGHFADARDERNRRKEFQRIVEAVKRGREVGLQVNAGHGLNYQNVAAIAALSDIVELNIGHAIIARALFTGMQSAVGEMKRLMREARE.

Asparagine 12 is a 3-amino-2-oxopropyl phosphate binding site. Position 14–15 (14–15 (DH)) interacts with 1-deoxy-D-xylulose 5-phosphate. A 3-amino-2-oxopropyl phosphate-binding site is contributed by arginine 23. Residue histidine 48 is the Proton acceptor of the active site. Residues arginine 50 and histidine 55 each contribute to the 1-deoxy-D-xylulose 5-phosphate site. Catalysis depends on glutamate 75, which acts as the Proton acceptor. Threonine 105 is a binding site for 1-deoxy-D-xylulose 5-phosphate. Catalysis depends on histidine 196, which acts as the Proton donor. Residues glycine 197 and 218-219 (GH) contribute to the 3-amino-2-oxopropyl phosphate site.

This sequence belongs to the PNP synthase family. In terms of assembly, homooctamer; tetramer of dimers.

It localises to the cytoplasm. It carries out the reaction 3-amino-2-oxopropyl phosphate + 1-deoxy-D-xylulose 5-phosphate = pyridoxine 5'-phosphate + phosphate + 2 H2O + H(+). Its pathway is cofactor biosynthesis; pyridoxine 5'-phosphate biosynthesis; pyridoxine 5'-phosphate from D-erythrose 4-phosphate: step 5/5. Catalyzes the complicated ring closure reaction between the two acyclic compounds 1-deoxy-D-xylulose-5-phosphate (DXP) and 3-amino-2-oxopropyl phosphate (1-amino-acetone-3-phosphate or AAP) to form pyridoxine 5'-phosphate (PNP) and inorganic phosphate. The chain is Pyridoxine 5'-phosphate synthase from Nitrosococcus oceani (strain ATCC 19707 / BCRC 17464 / JCM 30415 / NCIMB 11848 / C-107).